The sequence spans 210 residues: Syntaxin-binding protein 6 (210 aa).

Residue Ser-2 is modified to N-acetylserine. A v-SNARE coiled-coil homology domain is found at 151–210 (GNSILHSAADSVTSAVQKASQALNERGERLGRAEEKTEDMKNSAQQFAETAHKLAMKHKC).

Part of a ternary complex containing SNAP25 and STX1A that can be dissociated by NAPA and NSF. Interacts with STX4A.

It localises to the cytoplasm. It is found in the membrane. In terms of biological role, forms non-fusogenic complexes with SNAP25 and STX1A and may thereby modulate the formation of functional SNARE complexes and exocytosis. In Mus musculus (Mouse), this protein is Syntaxin-binding protein 6 (Stxbp6).